A 651-amino-acid polypeptide reads, in one-letter code: Transcription termination factor FttA (651 aa).

An archaeal CPSF-KH domain region spans residues 1–200 (MTFLIKRETQ…ITGLGGFREV (200 aa)). The interval 12 to 79 (DQILRDIRAV…ISVRPDPEVL (68 aa)) is KHa. The segment at 80–147 (LPPEEAEKLI…WAPKVVRTPP (68 aa)) is KHb. A metallo-beta-lactamase N-terminus region spans residues 188–398 (WIRITGLGGF…LVMESTYGGA (211 aa)). Residues His256, His258, Asp260, His261, His344, and Asp367 each contribute to the Zn(2+) site. Residues 399–592 (NDIQMPREEA…MEVHTIDGFS (194 aa)) are beta-Casp. A metallo-beta-lactamase C-terminus region spans residues 593-651 (GHADRRELMNYVAKVRPRPERIITVHGEPQKCLDLATSIHRKFGISTRAPNNLDTIRLR). His618 contributes to the Zn(2+) binding site.

It belongs to the metallo-beta-lactamase superfamily. RNA-metabolizing metallo-beta-lactamase-like family. FttA subfamily. In terms of assembly, homodimer. Interacts with RNA polymerase (RNAP), interacts with the Spt4-Spt5 complex. Zn(2+) serves as cofactor.

Functionally, terminates transcription on the whole genome. Termination is linked to FttA-mediated RNA cleavage and does not require NTP hydrolysis. Cleaves endonucleolytically at the RNA exit channel of RNA polymerase (RNAP); the 5'-3' exonuclease activity of this protein degrades the nascent RNA released from RNAP. Has nuclease activity on single-stranded RNA. The sequence is that of Transcription termination factor FttA from Pyrococcus horikoshii (strain ATCC 700860 / DSM 12428 / JCM 9974 / NBRC 100139 / OT-3).